A 287-amino-acid polypeptide reads, in one-letter code: Large ribosomal subunit protein uL2 (287 aa).

The tract at residues valine 220–serine 287 is disordered. Positions valine 271–serine 287 are enriched in basic residues.

It belongs to the universal ribosomal protein uL2 family. Part of the 50S ribosomal subunit. Forms a bridge to the 30S subunit in the 70S ribosome.

Its function is as follows. One of the primary rRNA binding proteins. Required for association of the 30S and 50S subunits to form the 70S ribosome, for tRNA binding and peptide bond formation. It has been suggested to have peptidyltransferase activity; this is somewhat controversial. Makes several contacts with the 16S rRNA in the 70S ribosome. In Prochlorococcus marinus (strain MIT 9515), this protein is Large ribosomal subunit protein uL2.